The primary structure comprises 247 residues: 2,3-bisphosphoglycerate-dependent phosphoglycerate mutase (247 aa).

Residues 8-15 (RHGESQWN), 21-22 (TG), Arg60, 87-90 (ERHY), Lys98, 114-115 (RR), and 183-184 (GN) each bind substrate. Residue His9 is the Tele-phosphohistidine intermediate of the active site. The active-site Proton donor/acceptor is Glu87.

It belongs to the phosphoglycerate mutase family. BPG-dependent PGAM subfamily.

It catalyses the reaction (2R)-2-phosphoglycerate = (2R)-3-phosphoglycerate. It functions in the pathway carbohydrate degradation; glycolysis; pyruvate from D-glyceraldehyde 3-phosphate: step 3/5. Catalyzes the interconversion of 2-phosphoglycerate and 3-phosphoglycerate. This is 2,3-bisphosphoglycerate-dependent phosphoglycerate mutase from Chlorobium chlorochromatii (strain CaD3).